The primary structure comprises 345 residues: Dihydroorotase (345 aa).

Zn(2+) is bound by residues His-13 and His-15. Residues 15–17 (HFR) and Asn-41 contribute to the substrate site. Residues Lys-98, His-135, and His-173 each contribute to the Zn(2+) site. Position 98 is an N6-carboxylysine (Lys-98). His-135 serves as a coordination point for substrate. Leu-218 provides a ligand contact to substrate. Position 246 (Asp-246) interacts with Zn(2+). Asp-246 is a catalytic residue. His-250 and Ala-262 together coordinate substrate.

Belongs to the metallo-dependent hydrolases superfamily. DHOase family. Class II DHOase subfamily. In terms of assembly, homodimer. It depends on Zn(2+) as a cofactor.

It catalyses the reaction (S)-dihydroorotate + H2O = N-carbamoyl-L-aspartate + H(+). It participates in pyrimidine metabolism; UMP biosynthesis via de novo pathway; (S)-dihydroorotate from bicarbonate: step 3/3. Functionally, catalyzes the reversible cyclization of carbamoyl aspartate to dihydroorotate. The sequence is that of Dihydroorotase from Shewanella frigidimarina (strain NCIMB 400).